The primary structure comprises 242 residues: Uridylate kinase (242 aa).

12–15 (KLSG) contacts ATP. The interval 20-25 (GEKGYG) is involved in allosteric activation by GTP. Glycine 55 contributes to the UMP binding site. Positions 56 and 60 each coordinate ATP. Residues aspartate 75 and 136–143 (TGNPYFST) each bind UMP. Residues tyrosine 169 and aspartate 172 each contribute to the ATP site.

This sequence belongs to the UMP kinase family. As to quaternary structure, homohexamer.

It localises to the cytoplasm. The catalysed reaction is UMP + ATP = UDP + ADP. Its pathway is pyrimidine metabolism; CTP biosynthesis via de novo pathway; UDP from UMP (UMPK route): step 1/1. With respect to regulation, allosterically activated by GTP. Inhibited by UTP. Catalyzes the reversible phosphorylation of UMP to UDP. The polypeptide is Uridylate kinase (Carboxydothermus hydrogenoformans (strain ATCC BAA-161 / DSM 6008 / Z-2901)).